The chain runs to 149 residues: Calmodulin-5/6/7/8 (149 aa).

The residue at position 2 (Ala-2) is an N-acetylalanine. 4 EF-hand domains span residues Asp-8 to Asn-43, Pro-44 to Asp-79, Asp-81 to Lys-116, and Leu-117 to Lys-149. The Ca(2+) site is built by Asp-21, Asp-23, Asp-25, Cys-27, Glu-32, Asp-57, Asp-59, Asn-61, Thr-63, Glu-68, Asp-94, Asp-96, Asn-98, and Glu-105. Lys-116 is modified (N6,N6,N6-trimethyllysine). 5 residues coordinate Ca(2+): Asp-130, Asp-132, Asp-134, Gln-136, and Glu-141.

The protein belongs to the calmodulin family. In terms of tissue distribution, high expression of PCM5 and 8 in stolon tips and stems, moderate in roots, and low in leaves. Steady-state expression of PCM6 in all the tissues tested, except in the leaves where the expression is lower.

Functionally, calmodulin mediates the control of a large number of enzymes, ion channels and other proteins by Ca(2+). Among the enzymes to be stimulated by the calmodulin-Ca(2+) complex are a number of protein kinases and phosphatases. This is Calmodulin-5/6/7/8 (PCM5) from Solanum tuberosum (Potato).